A 287-amino-acid chain; its full sequence is 4-hydroxybenzoate octaprenyltransferase (287 aa).

Transmembrane regions (helical) follow at residues 30 to 50 (ALWI…FTVG), 89 to 109 (WEAV…ILPL), 133 to 153 (FFAI…PMAF), 158 to 178 (GHVP…SVAY), 199 to 221 (ALTF…LGIY), and 267 to 287 (NNWL…AGSF).

Belongs to the UbiA prenyltransferase family. Requires Mg(2+) as cofactor.

It localises to the cell inner membrane. The enzyme catalyses all-trans-octaprenyl diphosphate + 4-hydroxybenzoate = 4-hydroxy-3-(all-trans-octaprenyl)benzoate + diphosphate. Its pathway is cofactor biosynthesis; ubiquinone biosynthesis. In terms of biological role, catalyzes the prenylation of para-hydroxybenzoate (PHB) with an all-trans polyprenyl group. Mediates the second step in the final reaction sequence of ubiquinone-8 (UQ-8) biosynthesis, which is the condensation of the polyisoprenoid side chain with PHB, generating the first membrane-bound Q intermediate 3-octaprenyl-4-hydroxybenzoate. This is 4-hydroxybenzoate octaprenyltransferase from Paraburkholderia phytofirmans (strain DSM 17436 / LMG 22146 / PsJN) (Burkholderia phytofirmans).